We begin with the raw amino-acid sequence, 373 residues long: Cobalt-precorrin-5B C(1)-methyltransferase (373 aa).

It belongs to the CbiD family.

It carries out the reaction Co-precorrin-5B + S-adenosyl-L-methionine = Co-precorrin-6A + S-adenosyl-L-homocysteine. The protein operates within cofactor biosynthesis; adenosylcobalamin biosynthesis; cob(II)yrinate a,c-diamide from sirohydrochlorin (anaerobic route): step 6/10. Catalyzes the methylation of C-1 in cobalt-precorrin-5B to form cobalt-precorrin-6A. The polypeptide is Cobalt-precorrin-5B C(1)-methyltransferase (Listeria welshimeri serovar 6b (strain ATCC 35897 / DSM 20650 / CCUG 15529 / CIP 8149 / NCTC 11857 / SLCC 5334 / V8)).